The following is a 198-amino-acid chain: Proteasome subunit beta 2 (198 aa).

Positions 1–4 (MVLA) are cleaved as a propeptide — removed in mature form; by autocatalysis. The active-site Nucleophile is Thr-5.

Belongs to the peptidase T1B family. In terms of assembly, the 20S proteasome core is composed of 14 alpha and 14 beta subunits that assemble into four stacked heptameric rings, resulting in a barrel-shaped structure. The two inner rings, each composed of seven catalytic beta subunits, are sandwiched by two outer rings, each composed of seven alpha subunits. The catalytic chamber with the active sites is on the inside of the barrel. Has a gated structure, the ends of the cylinder being occluded by the N-termini of the alpha-subunits. Is capped at one or both ends by the proteasome regulatory ATPase, PAN.

The protein resides in the cytoplasm. The enzyme catalyses Cleavage of peptide bonds with very broad specificity.. With respect to regulation, the formation of the proteasomal ATPase PAN-20S proteasome complex, via the docking of the C-termini of PAN into the intersubunit pockets in the alpha-rings, triggers opening of the gate for substrate entry. Interconversion between the open-gate and close-gate conformations leads to a dynamic regulation of the 20S proteasome proteolysis activity. In terms of biological role, component of the proteasome core, a large protease complex with broad specificity involved in protein degradation. This Korarchaeum cryptofilum (strain OPF8) protein is Proteasome subunit beta 2.